Here is a 74-residue protein sequence, read N- to C-terminus: Cytochrome c oxidase assembly factor 5 (74 aa).

The 39-residue stretch at 27-65 folds into the CHCH domain; the sequence is QSACVLQEGKSPRQCLKEGNCRALQYSFFECKRSMLDAR. The short motif at 30-41 is the Cx10C motif element; sequence CVLQEGKSPRQC. Disulfide bonds link Cys30–Cys57 and Cys41–Cys47. The residue at position 37 (Ser37) is a Phosphoserine. Positions 47–57 match the Cx9C motif motif; sequence CRALQYSFFEC.

It belongs to the PET191 family.

Involved in an early step of the mitochondrial complex IV assembly process. The protein is Cytochrome c oxidase assembly factor 5 (Coa5) of Mus musculus (Mouse).